A 272-amino-acid chain; its full sequence is 3-methyl-2-oxobutanoate hydroxymethyltransferase (272 aa).

The Mg(2+) site is built by D42 and D86. Residues 42 to 43 (DS), D86, and K116 contribute to the 3-methyl-2-oxobutanoate site. Mg(2+) is bound at residue E118. E185 acts as the Proton acceptor in catalysis.

Belongs to the PanB family. In terms of assembly, homodecamer; pentamer of dimers. Mg(2+) is required as a cofactor.

It is found in the cytoplasm. It catalyses the reaction 3-methyl-2-oxobutanoate + (6R)-5,10-methylene-5,6,7,8-tetrahydrofolate + H2O = 2-dehydropantoate + (6S)-5,6,7,8-tetrahydrofolate. The protein operates within cofactor biosynthesis; (R)-pantothenate biosynthesis; (R)-pantoate from 3-methyl-2-oxobutanoate: step 1/2. In terms of biological role, catalyzes the reversible reaction in which hydroxymethyl group from 5,10-methylenetetrahydrofolate is transferred onto alpha-ketoisovalerate to form ketopantoate. In Prochlorococcus marinus (strain MIT 9313), this protein is 3-methyl-2-oxobutanoate hydroxymethyltransferase.